Consider the following 150-residue polypeptide: MFDVLVYLYENYWRPDACPDHDQLSKKLSAVGFESEEIADALTWLDGLAGAAESHIGTQSELSLRVYSPSEQDHLGLASIAFISFLESAGVLPPAMREIAVDRAMALGGGPVALEDLKIIVLMVFWSLGEEPDALILDELFVDAEDRLIH.

The protein belongs to the Smg family.

The chain is Protein Smg homolog from Leptothrix cholodnii (strain ATCC 51168 / LMG 8142 / SP-6) (Leptothrix discophora (strain SP-6)).